A 425-amino-acid polypeptide reads, in one-letter code: Serine--tRNA ligase (425 aa).

An L-serine-binding site is contributed by 226-228 (TSE). ATP is bound by residues 257–259 (RRE) and Val-273. Glu-280 is an L-serine binding site. 344 to 347 (ELTS) contacts ATP. Thr-382 is an L-serine binding site.

This sequence belongs to the class-II aminoacyl-tRNA synthetase family. Type-1 seryl-tRNA synthetase subfamily. Homodimer. The tRNA molecule binds across the dimer.

It localises to the cytoplasm. The catalysed reaction is tRNA(Ser) + L-serine + ATP = L-seryl-tRNA(Ser) + AMP + diphosphate + H(+). The enzyme catalyses tRNA(Sec) + L-serine + ATP = L-seryl-tRNA(Sec) + AMP + diphosphate + H(+). It participates in aminoacyl-tRNA biosynthesis; selenocysteinyl-tRNA(Sec) biosynthesis; L-seryl-tRNA(Sec) from L-serine and tRNA(Sec): step 1/1. Its function is as follows. Catalyzes the attachment of serine to tRNA(Ser). Is also able to aminoacylate tRNA(Sec) with serine, to form the misacylated tRNA L-seryl-tRNA(Sec), which will be further converted into selenocysteinyl-tRNA(Sec). In Mycobacterium avium (strain 104), this protein is Serine--tRNA ligase.